The sequence spans 745 residues: Protein PHOX1 (745 aa).

Basic residues predominate over residues 1–10 (MGKPTGKKKN). The interval 1-37 (MGKPTGKKKNNNYTEMPPTESSTTGGGKTGKSFDRSA) is disordered. 3 TPR repeats span residues 52–85 (ALEL…LPRD), 90–125 (AYLR…SPRF), and 126–159 (SKAL…EPEN). A PB1 domain is found at 280–359 (TRTVKLVHGD…GSFRLYIAEV (80 aa)). 4 TPR repeats span residues 406-441 (EHWI…YTEA), 443-472 (EDIV…AMFN), 494-528 (ETIL…KSDF), and 553-586 (GEVD…WEEM).

In terms of assembly, interacts with myosin XI-1 and XI-K.

It is found in the cytoplasmic vesicle membrane. Its function is as follows. Carboxylate clamp type tetratricopeptide repeat protein that may act as a potential Hsp90/Hsp70 co-chaperone. Contributes to polar growth of root hairs. The sequence is that of Protein PHOX1 from Arabidopsis thaliana (Mouse-ear cress).